Here is a 387-residue protein sequence, read N- to C-terminus: 3-hydroxyisobutyryl-CoA hydrolase-like protein 5 (387 aa).

The residue at position 2 (A2) is an N-acetylalanine.

Belongs to the enoyl-CoA hydratase/isomerase family.

In Arabidopsis thaliana (Mouse-ear cress), this protein is 3-hydroxyisobutyryl-CoA hydrolase-like protein 5.